We begin with the raw amino-acid sequence, 266 residues long: Outer membrane protein OmpK (266 aa).

The N-terminal stretch at 1 to 20 is a signal peptide; that stretch reads MRKSLLALSLLAATSAPVLA.

The protein belongs to the nucleoside-specific channel-forming outer membrane porin (Tsx) (TC 1.B.10) family.

Its subcellular location is the cell outer membrane. Its function is as follows. Serves as receptor for a broad-host-range vibriophage, KVP40. The protein is Outer membrane protein OmpK (ompK) of Vibrio parahaemolyticus serotype O3:K6 (strain RIMD 2210633).